The chain runs to 208 residues: Ribonuclease HII (208 aa).

Residues 13 to 202 enclose the RNase H type-2 domain; sequence DLVAGVDEVG…VRQAYEAREA (190 aa). The a divalent metal cation site is built by Asp-19, Glu-20, and Asp-111.

Belongs to the RNase HII family. It depends on Mn(2+) as a cofactor. The cofactor is Mg(2+).

It localises to the cytoplasm. The catalysed reaction is Endonucleolytic cleavage to 5'-phosphomonoester.. In terms of biological role, endonuclease that specifically degrades the RNA of RNA-DNA hybrids. This Pseudomonas fluorescens (strain ATCC BAA-477 / NRRL B-23932 / Pf-5) protein is Ribonuclease HII.